A 133-amino-acid polypeptide reads, in one-letter code: Large ribosomal subunit protein bL20 (133 aa).

Belongs to the bacterial ribosomal protein bL20 family.

Its function is as follows. Binds directly to 23S ribosomal RNA and is necessary for the in vitro assembly process of the 50S ribosomal subunit. It is not involved in the protein synthesizing functions of that subunit. This chain is Large ribosomal subunit protein bL20, found in Bartonella tribocorum (strain CIP 105476 / IBS 506).